The primary structure comprises 158 residues: NADH-quinone oxidoreductase subunit B (158 aa).

[4Fe-4S] cluster is bound by residues Cys-37, Cys-38, Cys-102, and Cys-132.

This sequence belongs to the complex I 20 kDa subunit family. In terms of assembly, NDH-1 is composed of 14 different subunits. Subunits NuoB, C, D, E, F, and G constitute the peripheral sector of the complex. [4Fe-4S] cluster is required as a cofactor.

The protein localises to the cell inner membrane. It catalyses the reaction a quinone + NADH + 5 H(+)(in) = a quinol + NAD(+) + 4 H(+)(out). Its function is as follows. NDH-1 shuttles electrons from NADH, via FMN and iron-sulfur (Fe-S) centers, to quinones in the respiratory chain. Couples the redox reaction to proton translocation (for every two electrons transferred, four hydrogen ions are translocated across the cytoplasmic membrane), and thus conserves the redox energy in a proton gradient. The chain is NADH-quinone oxidoreductase subunit B from Legionella pneumophila (strain Paris).